A 324-amino-acid chain; its full sequence is MSSTTVRPSVNALAAPLVEALVADAAKLRLTVTANSGEARLVNAGATVLGSIEAGRRIAEICLGGLGTVTIAPTGPVAAWPYTITVHSTDPVLACLGSQYAGWSLADEGGTSGFFALGSGPGRAAAAVEHLFEELHYKDNAVQIALVLESASAPPASVVAKVAEAAGVPLEAVTFIYAPTQSLAGSTQVVARVLEVALHKAHSVGFDLAKIVDGIGAAPLSPPHPDFIQAMGRTNDAIIYGGRVQLFVDAEDADAKGLAEALPSTTSRDHGAPFAEIFARFNGDFYAIDSHLFSPAEVVVTSVRTGHSHRSGRLVPDLVERSFA.

The protein belongs to the MCH family.

It is found in the cytoplasm. The enzyme catalyses 5,10-methenyl-5,6,7,8-tetrahydromethanopterin + H2O = N(5)-formyl-5,6,7,8-tetrahydromethanopterin + H(+). Its pathway is one-carbon metabolism; formaldehyde degradation; formate from formaldehyde (H(4)MPT route): step 3/5. Catalyzes the hydrolysis of methenyl-H(4)MPT(+) to 5-formyl-H(4)MPT. The protein is Methenyltetrahydromethanopterin cyclohydrolase of Methylobacterium nodulans (strain LMG 21967 / CNCM I-2342 / ORS 2060).